A 265-amino-acid chain; its full sequence is Flavin-dependent thymidylate synthase (265 aa).

The ThyX domain occupies 11–224 (GFLKLIDFMG…PIAFNSFENH (214 aa)). FAD contacts are provided by residues serine 56, 79–81 (RHR), and glutamate 87. Residue 76-79 (QWMR) participates in dUMP binding. Positions 79 to 89 (RHRTARINEVS) match the ThyX motif motif. Arginine 155 provides a ligand contact to dUMP. Residues 171–173 (DLN) and histidine 177 each bind FAD. Arginine 182 contacts dUMP. Arginine 182 acts as the Involved in ionization of N3 of dUMP, leading to its activation in catalysis.

It belongs to the thymidylate synthase ThyX family. As to quaternary structure, homotetramer. FAD is required as a cofactor.

It catalyses the reaction dUMP + (6R)-5,10-methylene-5,6,7,8-tetrahydrofolate + NADPH + H(+) = dTMP + (6S)-5,6,7,8-tetrahydrofolate + NADP(+). The protein operates within pyrimidine metabolism; dTTP biosynthesis. Its function is as follows. Catalyzes the reductive methylation of 2'-deoxyuridine-5'-monophosphate (dUMP) to 2'-deoxythymidine-5'-monophosphate (dTMP) while utilizing 5,10-methylenetetrahydrofolate (mTHF) as the methyl donor, and NADPH and FADH(2) as the reductant. The protein is Flavin-dependent thymidylate synthase of Borreliella burgdorferi (strain ATCC 35210 / DSM 4680 / CIP 102532 / B31) (Borrelia burgdorferi).